Reading from the N-terminus, the 138-residue chain is Acidic phospholipase A2 CH-E6' (138 aa).

The N-terminal stretch at 1–16 (MRTLWIVAVLLLGVEG) is a signal peptide. Intrachain disulfides connect Cys-42–Cys-131, Cys-44–Cys-60, Cys-59–Cys-111, Cys-65–Cys-138, Cys-66–Cys-104, Cys-73–Cys-97, and Cys-91–Cys-102. Residues Tyr-43, Gly-45, and Gly-47 each coordinate Ca(2+). The active site involves His-63. Asp-64 is a binding site for Ca(2+). Asp-105 is an active-site residue.

Belongs to the phospholipase A2 family. Group II subfamily. D49 sub-subfamily. It depends on Ca(2+) as a cofactor. In terms of tissue distribution, expressed by the venom gland.

Its subcellular location is the secreted. The catalysed reaction is a 1,2-diacyl-sn-glycero-3-phosphocholine + H2O = a 1-acyl-sn-glycero-3-phosphocholine + a fatty acid + H(+). Functionally, snake venom phospholipase A2 (PLA2) that shows high lipolytic and weak ADP-induced platelet aggregation activities. Also shows weak anticoagulant activity. PLA2 catalyzes the calcium-dependent hydrolysis of the 2-acyl groups in 3-sn-phosphoglycerides. The chain is Acidic phospholipase A2 CH-E6' from Crotalus horridus (Timber rattlesnake).